Here is a 432-residue protein sequence, read N- to C-terminus: Glutamyl-tRNA reductase (432 aa).

Residues 49 to 52 (TCNR), S101, 106 to 108 (EPQ), and Q112 each bind substrate. C50 functions as the Nucleophile in the catalytic mechanism. Residue 181–186 (GAGETI) participates in NADP(+) binding. Residues 407-432 (FPEKPGYQHPPIATPIVRTDDADPAP) are disordered.

The protein belongs to the glutamyl-tRNA reductase family. In terms of assembly, homodimer.

The catalysed reaction is (S)-4-amino-5-oxopentanoate + tRNA(Glu) + NADP(+) = L-glutamyl-tRNA(Glu) + NADPH + H(+). It functions in the pathway porphyrin-containing compound metabolism; protoporphyrin-IX biosynthesis; 5-aminolevulinate from L-glutamyl-tRNA(Glu): step 1/2. In terms of biological role, catalyzes the NADPH-dependent reduction of glutamyl-tRNA(Glu) to glutamate 1-semialdehyde (GSA). This Xanthomonas oryzae pv. oryzae (strain MAFF 311018) protein is Glutamyl-tRNA reductase.